The chain runs to 375 residues: Chaperone protein DnaJ (375 aa).

The J domain occupies 5 to 70 (GYYEVLGVSK…QKRQAYDQFG (66 aa)). The segment at 142 to 220 (GKEYKIEIPR…CKGEGLTEKR (79 aa)) adopts a CR-type zinc-finger fold. Zn(2+) contacts are provided by cysteine 155, cysteine 158, cysteine 172, cysteine 175, cysteine 194, cysteine 197, cysteine 208, and cysteine 211. 4 CXXCXGXG motif repeats span residues 155–162 (CVDCTGSG), 172–179 (CPDCSGTG), 194–201 (CPRCKGKG), and 208–215 (CKTCKGEG).

This sequence belongs to the DnaJ family. As to quaternary structure, homodimer. Requires Zn(2+) as cofactor.

The protein localises to the cytoplasm. In terms of biological role, participates actively in the response to hyperosmotic and heat shock by preventing the aggregation of stress-denatured proteins and by disaggregating proteins, also in an autonomous, DnaK-independent fashion. Unfolded proteins bind initially to DnaJ; upon interaction with the DnaJ-bound protein, DnaK hydrolyzes its bound ATP, resulting in the formation of a stable complex. GrpE releases ADP from DnaK; ATP binding to DnaK triggers the release of the substrate protein, thus completing the reaction cycle. Several rounds of ATP-dependent interactions between DnaJ, DnaK and GrpE are required for fully efficient folding. Also involved, together with DnaK and GrpE, in the DNA replication of plasmids through activation of initiation proteins. This is Chaperone protein DnaJ from Leptospira biflexa serovar Patoc (strain Patoc 1 / Ames).